The chain runs to 607 residues: Elongation factor 4 (607 aa).

A tr-type G domain is found at 11–193 (SKIRNFSIIA…QIVEKVPAPT (183 aa)). GTP contacts are provided by residues 23-28 (DHGKST) and 140-143 (NKID).

This sequence belongs to the TRAFAC class translation factor GTPase superfamily. Classic translation factor GTPase family. LepA subfamily.

It is found in the cell membrane. The enzyme catalyses GTP + H2O = GDP + phosphate + H(+). Its function is as follows. Required for accurate and efficient protein synthesis under certain stress conditions. May act as a fidelity factor of the translation reaction, by catalyzing a one-codon backward translocation of tRNAs on improperly translocated ribosomes. Back-translocation proceeds from a post-translocation (POST) complex to a pre-translocation (PRE) complex, thus giving elongation factor G a second chance to translocate the tRNAs correctly. Binds to ribosomes in a GTP-dependent manner. The sequence is that of Elongation factor 4 from Bacillus anthracis (strain A0248).